The primary structure comprises 228 residues: Glycosylphosphatidylinositol-anchored high density lipoprotein-binding protein 1 (228 aa).

An N-terminal signal peptide occupies residues methionine 1–alanine 22. The disordered stretch occupies residues tryptophan 21–proline 32. An important for LPL transport to the lumenal surface of endothelial cells region spans residues glutamate 24–glutamate 48. Acidic residues predominate over residues glutamate 24–threonine 49. The residue at position 35 (tyrosine 35) is a Sulfotyrosine. A UPAR/Ly6 domain is found at leucine 61–proline 148. 5 disulfides stabilise this stretch: cysteine 63–cysteine 88, cysteine 66–cysteine 75, cysteine 81–cysteine 109, cysteine 113–cysteine 129, and cysteine 130–cysteine 135. N-linked (GlcNAc...) asparagine glycosylation is present at asparagine 76. The tract at residues leucine 102–tryptophan 108 is important for interaction with LPL. The disordered stretch occupies residues valine 145 to glycine 200. A lipid anchor (GPI-anchor amidated glycine) is attached at glycine 198. Positions serine 199–alanine 228 are cleaved as a propeptide — removed in mature form.

As to quaternary structure, mostly monomer, but also homodimer and homooligomer. Interacts with lipoprotein lipase (LPL). Interacts with high affinity with high-density lipoprotein (HDL). Interacts with chylomicrons. Interacts with APOA5. Post-translationally, glycosylation of Asn-76 is critical for cell surface localization. In terms of processing, sulfation of a Tyr in the N-terminal acidic region increases the affinity for LPL. As to expression, detected in fat tissue. Detected on the luminal surface of capillary endothelial cells in heart, skeletal muscle and brown adipose tissue (at protein level). Detected in heart and brown adipose tissue. Expressed at lower levels in lung and liver.

It is found in the apical cell membrane. It localises to the basolateral cell membrane. Its subcellular location is the cell membrane. Its function is as follows. Mediates the transport of lipoprotein lipase LPL from the basolateral to the apical surface of endothelial cells in capillaries. Anchors LPL on the surface of endothelial cells in the lumen of blood capillaries. Thereby, plays an important role in lipolytic processing of chylomicrons by LPL, triglyceride metabolism and lipid homeostasis. Binds chylomicrons and phospholipid particles that contain APOA5. Binds high-density lipoprotein (HDL) and plays a role in the uptake of lipids from HDL. This is Glycosylphosphatidylinositol-anchored high density lipoprotein-binding protein 1 from Mus musculus (Mouse).